We begin with the raw amino-acid sequence, 365 residues long: MAEFVRAQIFGTTFEITSRYSDLQPVGMGAFGLVCSARDQLTNQNVAVKKIMKPFSTPVLAKRTYRELKLLKHLKHENVISLSDIFISPLEDIVLRWGCSYFVTELLGTDLHRLLTSRPLEKQFIQYFLYQIMRGLKYVHSAGVVHRDLKPSNILVNENCDLKICDFGLARIQDPQMTGYVSTRYYRAPEIMLTWQKYDVEVDIWSAGCIFAEMLEGKPLFPGKDHVNQFSIITELLGTPPDDVINTIASENTLRFVKSLPKRERQSLKHKFKNADAPAIDLLESMLVFDPKKRITATNALAHEYLAPYHDPTDEPVAEEKFDWSFNDADLPVDTWKIMMYSEILDYHNVEAGVAAMEGQEFNGQ.

Residues 20–306 (YSDLQPVGMG…ATNALAHEYL (287 aa)) enclose the Protein kinase domain. ATP contacts are provided by residues 26–34 (VGMGAFGLV) and Lys49. Asp148 serves as the catalytic Proton acceptor. The short motif at 178 to 180 (TGY) is the TXY element.

Belongs to the protein kinase superfamily. Ser/Thr protein kinase family. MAP kinase subfamily. HOG1 sub-subfamily. The cofactor is Mg(2+).

The protein localises to the cytoplasm. Its subcellular location is the nucleus. It carries out the reaction L-seryl-[protein] + ATP = O-phospho-L-seryl-[protein] + ADP + H(+). The catalysed reaction is L-threonyl-[protein] + ATP = O-phospho-L-threonyl-[protein] + ADP + H(+). Its function is as follows. Proline-directed serine/threonine-protein kinase involved in a signal transduction pathway that is activated by changes in the osmolarity of the extracellular environment. Controls osmotic regulation of transcription of target genes. Involved in environmental stress response, hyphal growth, conidiation and possibly secondary metabolism such as ustiloxin biosynthesis or the biosynthesis of other phytotoxic compounds that are inhibitory to rice shoot growth during seed germination. Plays a key role in responses to cell wall and membrane stresses but not oxidative stress. In Ustilaginoidea virens (Rice false smut fungus), this protein is Mitogen-activated protein kinase HOG1.